We begin with the raw amino-acid sequence, 299 residues long: NAD kinase (299 aa).

The active-site Proton acceptor is the D71. Residues 71–72 (DG), 145–146 (ND), R173, D175, 186–191 (TAYSLS), A210, and Q248 each bind NAD(+).

The protein belongs to the NAD kinase family. A divalent metal cation is required as a cofactor.

Its subcellular location is the cytoplasm. It carries out the reaction NAD(+) + ATP = ADP + NADP(+) + H(+). In terms of biological role, involved in the regulation of the intracellular balance of NAD and NADP, and is a key enzyme in the biosynthesis of NADP. Catalyzes specifically the phosphorylation on 2'-hydroxyl of the adenosine moiety of NAD to yield NADP. In Bordetella bronchiseptica (strain ATCC BAA-588 / NCTC 13252 / RB50) (Alcaligenes bronchisepticus), this protein is NAD kinase.